The sequence spans 507 residues: Ribosomal protein uS12 methylthiotransferase RimO (507 aa).

An MTTase N-terminal domain is found at arginine 13–alanine 124. [4Fe-4S] cluster contacts are provided by cysteine 22, cysteine 58, cysteine 87, cysteine 205, cysteine 209, and cysteine 212. The region spanning leucine 191–arginine 422 is the Radical SAM core domain. The TRAM domain maps to glutamate 424–alanine 497.

Belongs to the methylthiotransferase family. RimO subfamily. [4Fe-4S] cluster is required as a cofactor.

It is found in the cytoplasm. It catalyses the reaction L-aspartate(89)-[ribosomal protein uS12]-hydrogen + (sulfur carrier)-SH + AH2 + 2 S-adenosyl-L-methionine = 3-methylsulfanyl-L-aspartate(89)-[ribosomal protein uS12]-hydrogen + (sulfur carrier)-H + 5'-deoxyadenosine + L-methionine + A + S-adenosyl-L-homocysteine + 2 H(+). In terms of biological role, catalyzes the methylthiolation of an aspartic acid residue of ribosomal protein uS12. This is Ribosomal protein uS12 methylthiotransferase RimO from Salinispora tropica (strain ATCC BAA-916 / DSM 44818 / JCM 13857 / NBRC 105044 / CNB-440).